An 87-amino-acid polypeptide reads, in one-letter code: Small ribosomal subunit protein bS20 (87 aa).

The interval 1 to 26 (MANIKSAKKRAVQSEKRRKHNASRRS) is disordered.

It belongs to the bacterial ribosomal protein bS20 family.

Its function is as follows. Binds directly to 16S ribosomal RNA. The protein is Small ribosomal subunit protein bS20 of Yersinia enterocolitica serotype O:8 / biotype 1B (strain NCTC 13174 / 8081).